A 364-amino-acid polypeptide reads, in one-letter code: MWNATPSEEPEPNVTLDLDWDASPGNDSLSDELLPLFPAPLLAGVTATCVALFVVGISGNLLTMLVVSRFRELRTTTNLYLSSMAFSDLLIFLCMPLDLVRLWQYRPWNFGDLLCKLFQFVSESCTYATVLTITALSVERYFAICFPLRAKVVVTKGRVKLVILVIWAVAFCSAGPIFVLVGVEHENGTDPRDTNECRATEFAVRSGLLTVMVWVSSVFFFLPVFCLTVLYSLIGRKLWRRRGDAAVGSSLRDQNHKQTVKMLAVVVFAFILCWLPFHVGRYLFSKSFEPGSLEIAQISQYCNLVSFVLFYLSAAINPILYNIMSKKYRVAVFKLLGFESFSQRKLSTLKDESSRAWTKSSINT.

At 1–40 (MWNATPSEEPEPNVTLDLDWDASPGNDSLSDELLPLFPAP) the chain is on the extracellular side. N-linked (GlcNAc...) asparagine glycosylation is found at N13 and N26. The chain crosses the membrane as a helical span at residues 41–66 (LLAGVTATCVALFVVGISGNLLTMLV). Topologically, residues 67–72 (VSRFRE) are cytoplasmic. A helical membrane pass occupies residues 73 to 96 (LRTTTNLYLSSMAFSDLLIFLCMP). The Extracellular segment spans residues 97–117 (LDLVRLWQYRPWNFGDLLCKL). C115 and C197 are oxidised to a cystine. Residues 118-139 (FQFVSESCTYATVLTITALSVE) form a helical membrane-spanning segment. At 140-162 (RYFAICFPLRAKVVVTKGRVKLV) the chain is on the cytoplasmic side. Residues 163–183 (ILVIWAVAFCSAGPIFVLVGV) form a helical membrane-spanning segment. Residues 184-211 (EHENGTDPRDTNECRATEFAVRSGLLTV) are Extracellular-facing. A glycan (N-linked (GlcNAc...) asparagine) is linked at N187. A helical membrane pass occupies residues 212 to 235 (MVWVSSVFFFLPVFCLTVLYSLIG). Residues 236-263 (RKLWRRRGDAAVGSSLRDQNHKQTVKML) are Cytoplasmic-facing. A helical transmembrane segment spans residues 264-285 (AVVVFAFILCWLPFHVGRYLFS). The Extracellular portion of the chain corresponds to 286 to 302 (KSFEPGSLEIAQISQYC). A helical transmembrane segment spans residues 303 to 326 (NLVSFVLFYLSAAINPILYNIMSK). The Cytoplasmic segment spans residues 327–364 (KYRVAVFKLLGFESFSQRKLSTLKDESSRAWTKSSINT).

This sequence belongs to the G-protein coupled receptor 1 family.

The protein localises to the cell membrane. Functionally, receptor for ghrelin, coupled to G-alpha-11 proteins. Stimulates growth hormone secretion. Also binds other growth hormone releasing peptides (GHRP) (e.g. Met-enkephalin and GHRP-6) as well as non-peptide, low molecular weight secretagogues (e.g. L-692,429, MK-0677, adenosine). The protein is Growth hormone secretagogue receptor type 1 (Ghsr) of Mus musculus (Mouse).